The primary structure comprises 178 residues: Inorganic pyrophosphatase (178 aa).

K30, R44, and Y56 together coordinate substrate. D66, D71, and D103 together coordinate Mg(2+). Y140 provides a ligand contact to substrate.

This sequence belongs to the PPase family. In terms of assembly, homohexamer. Mg(2+) is required as a cofactor.

It localises to the cytoplasm. The enzyme catalyses diphosphate + H2O = 2 phosphate + H(+). Catalyzes the hydrolysis of inorganic pyrophosphate (PPi) forming two phosphate ions. The polypeptide is Inorganic pyrophosphatase (Pyrococcus furiosus (strain ATCC 43587 / DSM 3638 / JCM 8422 / Vc1)).